The chain runs to 1453 residues: Collagen alpha-1(I) chain (1453 aa).

A signal peptide spans 1-22 (MFSFVDSRLLLLIAATVLLTRG). Positions 23-151 (EGEEDIQTGS…PPGLGGNFAP (129 aa)) are cleaved as a propeptide — N-terminal propeptide. One can recognise a VWFC domain in the interval 31–89 (GSCVQDGLTYNDKDVWKPEPCQICVCDSGNILCDEVICEDTSDCPNAEIPFGECCPICP). Positions 98-1203 (PESAGVEGPK…PQEKAHDGGR (1106 aa)) are disordered. A compositionally biased stretch (basic and acidic residues) spans 106-116 (PKGDTGPRGDR). The segment covering 131 to 143 (PGLPGPPGPPGPP) has biased composition (pro residues). Pyrrolidone carboxylic acid is present on Gln-152. An Allysine modification is found at Lys-160. A compositionally biased stretch (low complexity) spans 162–176 (AGVAVPGPMGPAGPR). 4-hydroxyproline is present on residues Pro-179, Pro-182, Pro-185, Pro-194, Pro-197, Pro-200, Pro-215, Pro-230, Pro-236, Pro-245, and Pro-251. The segment covering 187–206 (PQGFQGPPGEPGEPGASGPM) has biased composition (low complexity). Position 254 is a 5-hydroxylysine; alternate (Lys-254). Lys-254 carries an O-linked (Gal...) hydroxylysine; partial glycan. The span at 265–284 (AKGQPGPAGPKGEPGSPGEN) shows a compositional bias: low complexity. 4-hydroxyproline is present on residues Pro-269, Pro-278, Pro-281, Pro-287, Pro-296, Pro-302, Pro-317, Pro-323, Pro-332, and Pro-335. A compositionally biased stretch (low complexity) spans 307-319 (PAGARGNDGAPGA). Residues 320–334 (AGPPGPTGPAGPPGF) show a composition bias toward pro residues. The span at 350 to 361 (RGSEGPQGSRGE) shows a compositional bias: low complexity. Residues Pro-362, Pro-365, Pro-377, Pro-383, Pro-392, Pro-398, Pro-401, and Pro-416 each carry the 4-hydroxyproline modification. A compositionally biased stretch (low complexity) spans 368 to 418 (AGAAGPAGNPGADGQPGAKGATGAPGIAGAPGFPGARGPSGPQGPSGAPGP). Lys-419 is subject to 5-hydroxylysine. 4-hydroxyproline is present on residues Pro-425, Pro-428, Pro-440, Pro-449, Pro-464, Pro-470, Pro-479, and Pro-485. The span at 463-482 (EPGPAGLPGPAGERGAPGSR) shows a compositional bias: low complexity. Lys-494 bears the 5-hydroxylysine mark. Pro-497, Pro-503, Pro-512, Pro-518, Pro-524, Pro-533, Pro-536, Pro-545, Pro-554, Pro-560, Pro-572, Pro-581, Pro-584, Pro-590, Pro-593, Pro-611, Pro-629, Pro-635, Pro-641, Pro-647, Pro-653, Pro-659, Pro-671, Pro-680, Pro-692, Pro-704, Pro-707, Pro-713, Pro-719, Pro-728, and Pro-737 each carry 4-hydroxyproline. A compositionally biased stretch (low complexity) spans 527-581 (KGLTGSPGSPGPDGKTGPPGPAGQDGRPGPAGPPGARGQAGVMGFPGPKGAAGEP). The span at 623–664 (QGPAGAPGFQGLPGPAGPPGEAGKPGEQGVPGNAGAPGPAGA) shows a compositional bias: low complexity. The segment covering 685-722 (PRGANGAPGNDGAKGDAGAPGAPGNEGPPGLEGMPGER) has biased composition (low complexity). Position 740 is a 5-hydroxylysine (Lys-740). 4-hydroxyproline occurs at positions 746, 761, 767, 776, 788, 794, 797, 806, 812, 830, 839, and 848. Positions 800-827 (AGFAGPPGADGQPGAKGETGDAGAKGDA) are enriched in low complexity. Positions 835–883 (PTGAPGPAGZVGAPGPKGARGSAGPPGATGFPGAAGRVGPPGPSGNIGL) are enriched in low complexity. 5-hydroxylysine is present on Lys-851. 4-hydroxyproline is present on residues Pro-860 and Pro-866. 3-hydroxyproline is present on Pro-874. 4-hydroxyproline is present on residues Pro-875, Pro-884, Pro-887, Pro-908, Pro-911, Pro-917, Pro-920, Pro-926, Pro-935, Pro-953, Pro-962, Pro-965, Pro-971, Pro-986, Pro-992, Pro-998, Pro-1007, and Pro-1013. The segment covering 890 to 908 (AGKZGSKGPRGETGPAGRP) has biased composition (low complexity). Residues 910–920 (EPGPAGPPGPP) show a composition bias toward pro residues. Residues 985-995 (PPGPMGPPGLA) show a composition bias toward pro residues. Residues 997–1021 (PPGEAGREGAPGAEGAPGRDGAAGP) are compositionally biased toward low complexity. Lys-1022 carries the post-translational modification 5-hydroxylysine; partial. Residues 1031-1046 (AGPPGAPGAPGAPGPV) are compositionally biased toward pro residues. Pro-1034, Pro-1037, Pro-1040, and Pro-1067 each carry 4-hydroxyproline. Positions 1070-1081 (AGARGPAGPQGP) are enriched in low complexity. Basic and acidic residues predominate over residues 1082-1096 (RGDKGETGEQGDRGM). Lys-1085 bears the 5-hydroxylysine; partial mark. Residue Lys-1097 is modified to 5-hydroxylysine; alternate. Lys-1097 carries O-linked (Gal...) hydroxylysine; partial glycosylation. 5 positions are modified to 4-hydroxyproline: Pro-1109, Pro-1112, Pro-1115, Pro-1133, and Pro-1148. Residues 1115 to 1139 (PGEQGPSGASGPAGPRGPPGSAGAA) are compositionally biased toward low complexity. The residue at position 1153 (Pro-1153) is a 3-hydroxyproline. Pro-1154 is modified (4-hydroxyproline). The span at 1166-1181 (VGPPGPPGPPGPPGPP) shows a compositional bias: pro residues. Pro-1168 is subject to 3-hydroxyproline. Residue Pro-1169 is modified to 4-hydroxyproline. 3-hydroxyproline is present on Pro-1171. Residue Pro-1172 is modified to 4-hydroxyproline. Pro-1174 carries the 3-hydroxyproline modification. 4-hydroxyproline is present on residues Pro-1175, Pro-1178, and Pro-1181. Lys-1197 carries the post-translational modification Allysine. Positions 1208-1453 (DDANVMRDRD…GIDIGPVCFL (246 aa)) are cleaved as a propeptide — C-terminal propeptide. Positions 1218–1453 (LEVDTTLKSL…GIDIGPVCFL (236 aa)) constitute a Fibrillar collagen NC1 domain. 3 disulfide bridges follow: Cys-1248–Cys-1280, Cys-1288–Cys-1451, and Cys-1359–Cys-1404. Positions 1266, 1268, 1269, 1271, and 1274 each coordinate Ca(2+). N-linked (GlcNAc...) asparagine glycosylation is present at Asn-1354.

The protein belongs to the fibrillar collagen family. In terms of assembly, trimers of one alpha 2(I) and two alpha 1(I) chains. Post-translationally, contains mostly 4-hydroxyproline. Proline residues at the third position of the tripeptide repeating unit (G-X-Y) are 4-hydroxylated in some or all of the chains. Contains 3-hydroxyproline. This modification occurs on the first proline residue in the sequence motif Gly-Pro-Hyp, where Hyp is 4-hydroxyproline. In terms of processing, lysine residues at the third position of the tripeptide repeating unit (G-X-Y) are 5-hydroxylated in some or all of the chains. Post-translationally, O-glycosylated on hydroxylated lysine residues. The O-linked glycan consists of a Glc-Gal disaccharide. As to expression, forms the fibrils of tendon, ligaments and bones. In bones the fibrils are mineralized with calcium hydroxyapatite.

Its subcellular location is the secreted. The protein resides in the extracellular space. It localises to the extracellular matrix. Type I collagen is a member of group I collagen (fibrillar forming collagen). The sequence is that of Collagen alpha-1(I) chain (COL1A1) from Gallus gallus (Chicken).